Consider the following 99-residue polypeptide: Integration host factor subunit alpha (99 aa).

This sequence belongs to the bacterial histone-like protein family. Heterodimer of an alpha and a beta chain.

In terms of biological role, this protein is one of the two subunits of integration host factor, a specific DNA-binding protein that functions in genetic recombination as well as in transcriptional and translational control. In Alteromonas mediterranea (strain DSM 17117 / CIP 110805 / LMG 28347 / Deep ecotype), this protein is Integration host factor subunit alpha.